Reading from the N-terminus, the 86-residue chain is Putative sodium channel toxin Ts17 (86 aa).

A signal peptide spans 1 to 19 (MNYFIFLVVACLLTAGTEG). The region spanning 21–82 (KDGYPVEGDN…EPTKTSGRCK (62 aa)) is the LCN-type CS-alpha/beta domain. 4 cysteine pairs are disulfide-bonded: cysteine 31–cysteine 81, cysteine 35–cysteine 57, cysteine 43–cysteine 64, and cysteine 47–cysteine 66. A Proline amide modification is found at proline 83.

This sequence belongs to the long (4 C-C) scorpion toxin superfamily. Sodium channel inhibitor family. Alpha subfamily. As to expression, expressed by the venom gland.

Its subcellular location is the secreted. Its function is as follows. Alpha toxins bind voltage-independently at site-3 of sodium channels (Nav) and inhibit the inactivation of the activated channels, thereby blocking neuronal transmission. The polypeptide is Putative sodium channel toxin Ts17 (Tityus serrulatus (Brazilian scorpion)).